A 21-amino-acid chain; its full sequence is MIASHLAFEKLSKLGSKHTML.

Residue leucine 21 is modified to Leucine amide.

As to expression, expressed by the venom gland.

Its subcellular location is the secreted. May inhibit growth of bacteria. In Lycosa singoriensis (Wolf spider), this protein is M-lycotoxin-Ls4a.